A 184-amino-acid chain; its full sequence is Oocyte-secreted protein 4A (184 aa).

Positions 1–19 (MKISCVLGKLLMLFELIHG) are cleaved as a signal peptide. N-linked (GlcNAc...) asparagine glycosylation is present at Asn128.

Belongs to the PLAC1 family.

The protein localises to the secreted. This Homo sapiens (Human) protein is Oocyte-secreted protein 4A.